An 839-amino-acid chain; its full sequence is Enhancer of polycomb-like protein 1 (839 aa).

Disordered stretches follow at residues 350-379 (QKKR…AGSA), 393-415 (GSGS…PSKI), 608-640 (LADR…ISSD), and 679-839 (QQQQ…KVDA). A compositionally biased stretch (basic and acidic residues) spans 608–620 (LADRQKYDRETEP). Polar residues predominate over residues 621 to 640 (TRQMSSYDKDPSQLNGISSD). The span at 679-690 (QQQQQQMRNRQQ) shows a compositional bias: low complexity. The span at 697–713 (PGAGLGGGQGAGGGAGG) shows a compositional bias: gly residues. Residues 714-730 (SRNNSPAPGTNGPQSKM) are compositionally biased toward polar residues. Positions 747 to 786 (QHQQYQQMQQQQQQQQQQQQQRKMGVAPMNAASAAAAMAA) are enriched in low complexity. Basic and acidic residues predominate over residues 828 to 839 (MKQKSELAKVDA).

Belongs to the enhancer of polycomb family. In terms of assembly, component of the NuA4 histone acetyltransferase complex.

The protein localises to the nucleus. Its function is as follows. Component of the NuA4 histone acetyltransferase complex which is involved in transcriptional activation of selected genes principally by acetylation of nucleosomal histone H4 and H2A. The NuA4 complex is also involved in DNA repair. Involved in gene silencing by neighboring heterochromatin, blockage of the silencing spreading along the chromosome, and required for cell cycle progression through G2/M. This Yarrowia lipolytica (strain CLIB 122 / E 150) (Yeast) protein is Enhancer of polycomb-like protein 1 (EPL1).